We begin with the raw amino-acid sequence, 325 residues long: Transaldolase (325 aa).

Lysine 125 acts as the Schiff-base intermediate with substrate in catalysis.

Belongs to the transaldolase family. Type 2 subfamily.

It localises to the cytoplasm. The catalysed reaction is D-sedoheptulose 7-phosphate + D-glyceraldehyde 3-phosphate = D-erythrose 4-phosphate + beta-D-fructose 6-phosphate. It participates in carbohydrate degradation; pentose phosphate pathway; D-glyceraldehyde 3-phosphate and beta-D-fructose 6-phosphate from D-ribose 5-phosphate and D-xylulose 5-phosphate (non-oxidative stage): step 2/3. Transaldolase is important for the balance of metabolites in the pentose-phosphate pathway. This Campylobacter jejuni subsp. jejuni serotype O:23/36 (strain 81-176) protein is Transaldolase.